The primary structure comprises 438 residues: MCKDYVYDKDIEQIAKEEQGEALKLQASTSTEVSHQQCSVPGLGEKFPTWETTKPELELLGHNPRRRRITSSFTIGLRGLINLGNTCFMNCIVQALTHTPILRDFFLSDRHRCEMPSPELCLVCEMSSLFRELYSGNPSPHVPYKLLHLVWIHARHLAGYRQQDAHEFLIAALDVLHRHCKGDDVGKAANNPNHCNCIIDQIFTGGLQSDVTCQACHGVSTTIDPCWDISLDLPGSCTSFWPMSPGRESSVNGESHIPGITTLTDCLRRFTRPEHLGSSAKIKCGSCQSYQESTKQLTMNKLPVVACFHFKRFEHSAKQRRKITTYISFPLELDMTPFMASSKESRMNGQLQLPTNSGNNENKYSLFAVVNHQGTLESGHYTSFIRHHKDQWFKCDDAVITKASIKDVLDSEGYLLFYHKQVLEHESEKVKEMNTQAY.

Residues 78–421 (RGLINLGNTC…EGYLLFYHKQ (344 aa)) form the USP domain. Cysteine 87 functions as the Nucleophile in the catalytic mechanism. Histidine 380 functions as the Proton acceptor in the catalytic mechanism.

This sequence belongs to the peptidase C19 family. Interacts with phosphorylated BCL2L11 isoform BIMEL; this interaction leads to BCL2L11 deubiquitination and stabilization.

The protein localises to the cytoplasm. The protein resides in the cytosol. Its subcellular location is the nucleus. It catalyses the reaction Thiol-dependent hydrolysis of ester, thioester, amide, peptide and isopeptide bonds formed by the C-terminal Gly of ubiquitin (a 76-residue protein attached to proteins as an intracellular targeting signal).. Deubiquitinase involved in innate antiviral immunity by mediating deubiquitination of CGAS and RIGI. Negatively regulates RIGI by mediating 'Lys-63'-linked deubiquitination of RIGI, inhibiting type I interferon signaling. Also regulates 'Lys-63'-linked ubiquitination level of MDA5/IFIH1. Acts as a positive regulator of the cGAS-STING pathway by catalyzing 'Lys-48'-linked deubiquitination of CGAS, thereby promoting its stabilization. Can reduce the levels of BCL2L11/BIM ubiquitination and stabilize BCL2L11 in response to the RAF-MAPK-degradation signal. By acting on BCL2L11 levels, may counteract the anti-apoptotic effects of MAPK activity. The chain is Ubiquitin carboxyl-terminal hydrolase 27 from Homo sapiens (Human).